Consider the following 280-residue polypeptide: Putative pyruvate, phosphate dikinase regulatory protein (280 aa).

158–165 (GVSRTSKT) contributes to the ADP binding site.

The protein belongs to the pyruvate, phosphate/water dikinase regulatory protein family. PDRP subfamily.

It catalyses the reaction N(tele)-phospho-L-histidyl/L-threonyl-[pyruvate, phosphate dikinase] + ADP = N(tele)-phospho-L-histidyl/O-phospho-L-threonyl-[pyruvate, phosphate dikinase] + AMP + H(+). It carries out the reaction N(tele)-phospho-L-histidyl/O-phospho-L-threonyl-[pyruvate, phosphate dikinase] + phosphate + H(+) = N(tele)-phospho-L-histidyl/L-threonyl-[pyruvate, phosphate dikinase] + diphosphate. Functionally, bifunctional serine/threonine kinase and phosphorylase involved in the regulation of the pyruvate, phosphate dikinase (PPDK) by catalyzing its phosphorylation/dephosphorylation. In Lactobacillus gasseri (strain ATCC 33323 / DSM 20243 / BCRC 14619 / CIP 102991 / JCM 1131 / KCTC 3163 / NCIMB 11718 / NCTC 13722 / AM63), this protein is Putative pyruvate, phosphate dikinase regulatory protein.